Consider the following 324-residue polypeptide: MSIRVGIVGISGFGGGEAMRLIAGHPAFEPVYAAGEGSAGQRLSERFPGVPAKLADLVIEKWDPSRLPQLDVLFASLPTGASRDALARIPREVKIVDIGGDHRYADGWTYGLADVWPEAIAGKTRIANPGCFPAAALTALAPLLADRLIAPENIVIDAKTGISGAGRGGGAGFGYAESNENLIPYGLLKHVHMPEIESTIARISGGSAAGLVFTPHLVPMTRGILATIYARGRATSDQCLDAARSFYAGRAFVRVTDKPPQTKWATGSNLAFVSYAADPDRNLVIALGVVDNLGKGAAGQAVQNANLMCGLPETAGLEGAPVWP.

Residue Cys131 is part of the active site.

Belongs to the NAGSA dehydrogenase family. Type 1 subfamily.

Its subcellular location is the cytoplasm. It catalyses the reaction N-acetyl-L-glutamate 5-semialdehyde + phosphate + NADP(+) = N-acetyl-L-glutamyl 5-phosphate + NADPH + H(+). Its pathway is amino-acid biosynthesis; L-arginine biosynthesis; N(2)-acetyl-L-ornithine from L-glutamate: step 3/4. Its function is as follows. Catalyzes the NADPH-dependent reduction of N-acetyl-5-glutamyl phosphate to yield N-acetyl-L-glutamate 5-semialdehyde. The polypeptide is N-acetyl-gamma-glutamyl-phosphate reductase (Bradyrhizobium sp. (strain ORS 278)).